The following is a 324-amino-acid chain: Integrin-binding sialoprotein (324 aa).

An N-terminal signal peptide occupies residues 1–16; that stretch reads MKTALILLSILGMACA. 5 positions are modified to phosphoserine: serine 31, serine 67, serine 75, serine 76, and serine 95. Disordered regions lie at residues 60–228 and 243–263; these read VQGG…GREL and QQTTPPPEAYGTTSPPIRKSS. A compositionally biased stretch (acidic residues) spans 66–105; that stretch reads SSEENGDGDSSEEEGEEEETSNEEENNEDSEGNEDQEAEA. Residues 106–130 are compositionally biased toward polar residues; that stretch reads ENSTLSTLSGVTASYGAETTPQAQT. N-linked (GlcNAc...) asparagine glycosylation occurs at asparagine 107. The segment covering 141-154 has biased composition (basic and acidic residues); the sequence is KAGDAESRAPKVKE. Residue serine 155 is modified to Phosphoserine. Positions 155–179 are enriched in acidic residues; it reads SDEEEEEEEEEEENENEEAEVDENE. Asparagine 183, asparagine 188, and asparagine 196 each carry an N-linked (GlcNAc...) asparagine glycan. Acidic residues predominate over residues 203 to 213; that stretch reads NGEEAEAEEAS. The span at 253–263 shows a compositional bias: polar residues; it reads GTTSPPIRKSS. The short motif at 293–295 is the Integrin-binding motif element; it reads RGD. A sulfotyrosine mark is found at tyrosine 320 and tyrosine 321.

As to quaternary structure, monomer. Interacts with integrins; the interaction promotes cell adhesion.

The protein resides in the secreted. Functionally, binds tightly to hydroxyapatite. Appears to form an integral part of the mineralized matrix. Probably important to cell-matrix interaction. Promotes adhesion and migration of various cells via the alpha-V/beta-3 integrin receptor (ITGAV:ITGB3). This Mus musculus (Mouse) protein is Integrin-binding sialoprotein (Ibsp).